The primary structure comprises 100 residues: Urease subunit gamma (100 aa).

Belongs to the urease gamma subunit family. As to quaternary structure, heterotrimer of UreA (gamma), UreB (beta) and UreC (alpha) subunits. Three heterotrimers associate to form the active enzyme.

Its subcellular location is the cytoplasm. The catalysed reaction is urea + 2 H2O + H(+) = hydrogencarbonate + 2 NH4(+). It participates in nitrogen metabolism; urea degradation; CO(2) and NH(3) from urea (urease route): step 1/1. The protein is Urease subunit gamma of Actinobacillus pleuropneumoniae serotype 5b (strain L20).